The chain runs to 221 residues: Putative NAD(P)H nitroreductase YfkO (221 aa).

Residues 15 to 17 and 73 to 75 contribute to the FMN site; these read RHA and QKQ. 157–162 serves as a coordination point for NAD(+); the sequence is AAAQIG. FMN is bound by residues 169-170 and arginine 211; that span reads EG.

The protein belongs to the nitroreductase family. In terms of assembly, monomer. It depends on FMN as a cofactor.

The chain is Putative NAD(P)H nitroreductase YfkO (yfkO) from Bacillus subtilis (strain 168).